A 211-amino-acid polypeptide reads, in one-letter code: FMN-dependent NADH:quinone oxidoreductase (211 aa).

17-19 (SYS) lines the FMN pocket.

This sequence belongs to the azoreductase type 1 family. As to quaternary structure, homodimer. Requires FMN as cofactor.

The enzyme catalyses 2 a quinone + NADH + H(+) = 2 a 1,4-benzosemiquinone + NAD(+). It catalyses the reaction N,N-dimethyl-1,4-phenylenediamine + anthranilate + 2 NAD(+) = 2-(4-dimethylaminophenyl)diazenylbenzoate + 2 NADH + 2 H(+). Quinone reductase that provides resistance to thiol-specific stress caused by electrophilic quinones. Functionally, also exhibits azoreductase activity. Catalyzes the reductive cleavage of the azo bond in aromatic azo compounds to the corresponding amines. The polypeptide is FMN-dependent NADH:quinone oxidoreductase (Bacillus pumilus (strain SAFR-032)).